The primary structure comprises 253 residues: Glucosamine-6-phosphate deaminase (253 aa).

D65 serves as the catalytic Proton acceptor; for enolization step. Residue N133 is the For ring-opening step of the active site. Catalysis depends on H135, which acts as the Proton acceptor; for ring-opening step. The active-site For ring-opening step is the E140.

This sequence belongs to the glucosamine/galactosamine-6-phosphate isomerase family. NagB subfamily.

The catalysed reaction is alpha-D-glucosamine 6-phosphate + H2O = beta-D-fructose 6-phosphate + NH4(+). It participates in amino-sugar metabolism; N-acetylneuraminate degradation; D-fructose 6-phosphate from N-acetylneuraminate: step 5/5. In terms of biological role, catalyzes the reversible isomerization-deamination of glucosamine 6-phosphate (GlcN6P) to form fructose 6-phosphate (Fru6P) and ammonium ion. This chain is Glucosamine-6-phosphate deaminase, found in Corynebacterium glutamicum (strain ATCC 13032 / DSM 20300 / JCM 1318 / BCRC 11384 / CCUG 27702 / LMG 3730 / NBRC 12168 / NCIMB 10025 / NRRL B-2784 / 534).